The chain runs to 1381 residues: DNA-directed RNA polymerase subunit beta (1381 aa).

The protein belongs to the RNA polymerase beta chain family. The RNAP catalytic core consists of 2 alpha, 1 beta, 1 beta' and 1 omega subunit. When a sigma factor is associated with the core the holoenzyme is formed, which can initiate transcription.

The catalysed reaction is RNA(n) + a ribonucleoside 5'-triphosphate = RNA(n+1) + diphosphate. DNA-dependent RNA polymerase catalyzes the transcription of DNA into RNA using the four ribonucleoside triphosphates as substrates. The polypeptide is DNA-directed RNA polymerase subunit beta (Halorhodospira halophila (strain DSM 244 / SL1) (Ectothiorhodospira halophila (strain DSM 244 / SL1))).